Reading from the N-terminus, the 1659-residue chain is Intersectin-2 (1659 aa).

Residues 22–110 form the EH 1 domain; sequence ERTKHDKQFD…PIMKQPPMFS (89 aa). Residues 54–89 enclose the EF-hand 1 domain; the sequence is LPAPVLAEIWALSDLNKDGKMDQQEFSIAMKLIKLK. 5 residues coordinate Ca(2+): Asp67, Asn69, Asp71, Lys73, and Glu78. Phosphoserine is present on residues Ser110, Ser211, and Ser231. The span at 220–231 shows a compositional bias: low complexity; that stretch reads STSSTASLSGNS. Positions 220–242 are disordered; the sequence is STSSTASLSGNSPKTGTSEWAVP. Residues 245 to 334 form the EH 2 domain; it reads SRLKYRQKFN…PELVPPSFRG (90 aa). In terms of domain architecture, EF-hand 2 spans 278–313; that stretch reads LSQTQLATIWTLADIDGDGQLKAEEFILAMHLTDMA. The disordered stretch occupies residues 335-382; that stretch reads GKQVDSVNGTLPSYQKTQEEEPQKKLPVTFEDKRKANYERGNMELEKR. A compositionally biased stretch (polar residues) spans 339 to 350; it reads DSVNGTLPSYQK. The span at 351–382 shows a compositional bias: basic and acidic residues; sequence TQEEEPQKKLPVTFEDKRKANYERGNMELEKR. Residues 365–717 are a coiled coil; the sequence is EDKRKANYER…KAEAKQSETA (353 aa). Tyr554 carries the post-translational modification Phosphotyrosine. A Phosphothreonine modification is found at Thr574. Positions 689–713 are enriched in basic and acidic residues; it reads KQKRLQEEKSQDKTQEEERKAEAKQ. Positions 689–715 are disordered; it reads KQKRLQEEKSQDKTQEEERKAEAKQSE. An SH3 1 domain is found at 718-779; the sequence is SALVNYRALY…PCNYVEKVLS (62 aa). Thr836 carries the post-translational modification Phosphothreonine. Phosphoserine is present on residues Ser838 and Ser843. The SH3 2 domain occupies 852-910; the sequence is VENLKAQALCSWTAKKENHLNFSKHDVITVLEQQENWWFGEVHGGRGWFPKSYVKLIPG. Tyr922 is subject to Phosphotyrosine. 3 consecutive SH3 domains span residues 942–1000, 1014–1078, and 1088–1147; these read PVGE…PKDQ, KKPE…LLGP, and HAVC…MTTD. The DH domain maps to 1170–1357; the sequence is KRQGYIHELI…EELCSQVNEG (188 aa). The PH domain maps to 1396–1506; that stretch reads KLLHSGKLYK…WVQKIKGASE (111 aa). The C2 domain maps to 1514–1630; that stretch reads KKREKAYQAR…RTEQESKGPT (117 aa). Ca(2+)-binding residues include Asp1602, Ser1605, and Asp1608.

Belongs to a complex that may contain multimers of ITSN1, ITSN2 and EPS15, and different partners according to the step in the endocytic process. Interacts with ADAM15. Interacts with FASLG. Interacts with ANKRD54. Interacts with FCHO2. The cofactor is Ca(2+). In terms of tissue distribution, widely expressed in adult tissues.

Its subcellular location is the cytoplasm. In terms of biological role, adapter protein that may provide indirect link between the endocytic membrane traffic and the actin assembly machinery. May regulate the formation of clathrin-coated vesicles (CCPs). Seems to be involved in CCPs maturation including invagination or budding. Involved in endocytosis of integrin beta-1 (ITGB1) and transferrin receptor (TFR). Plays a role in dendrite formation by melanocytes. The chain is Intersectin-2 (Itsn2) from Mus musculus (Mouse).